Reading from the N-terminus, the 116-residue chain is MAGVLKKTTGLVGLAVCNTPHERLRILYTKILDVLEEIPKNAAYRKYTEQITNEKLAMVKAEPDVKKLEDQLQGGQLEEVILQAEHELNLARKMREWKLWEPLVEEPPADQWKWPI.

Ala-2 carries the N-acetylalanine modification. N6-acetyllysine occurs at positions 30, 46, and 60. Lys-98 carries the N6-acetyllysine; alternate modification. Lys-98 is modified (N6-succinyllysine; alternate).

This sequence belongs to the complex I NDUFA5 subunit family. As to quaternary structure, complex I is composed of 45 different subunits.

Its subcellular location is the mitochondrion inner membrane. Its function is as follows. Accessory subunit of the mitochondrial membrane respiratory chain NADH dehydrogenase (Complex I), that is believed not to be involved in catalysis. Complex I functions in the transfer of electrons from NADH to the respiratory chain. The immediate electron acceptor for the enzyme is believed to be ubiquinone. In Gorilla gorilla gorilla (Western lowland gorilla), this protein is NADH dehydrogenase [ubiquinone] 1 alpha subcomplex subunit 5 (NDUFA5).